A 136-amino-acid polypeptide reads, in one-letter code: Nucleoside diphosphate kinase (136 aa).

ATP-binding residues include Lys10, Phe58, Arg86, Thr92, Arg104, and Asn114. Residue His117 is the Pros-phosphohistidine intermediate of the active site.

This sequence belongs to the NDK family. Homotetramer. The cofactor is Mg(2+).

Its subcellular location is the cytoplasm. It carries out the reaction a 2'-deoxyribonucleoside 5'-diphosphate + ATP = a 2'-deoxyribonucleoside 5'-triphosphate + ADP. The enzyme catalyses a ribonucleoside 5'-diphosphate + ATP = a ribonucleoside 5'-triphosphate + ADP. Major role in the synthesis of nucleoside triphosphates other than ATP. The ATP gamma phosphate is transferred to the NDP beta phosphate via a ping-pong mechanism, using a phosphorylated active-site intermediate. This Saccharopolyspora erythraea (strain ATCC 11635 / DSM 40517 / JCM 4748 / NBRC 13426 / NCIMB 8594 / NRRL 2338) protein is Nucleoside diphosphate kinase.